The primary structure comprises 432 residues: Enolase (432 aa).

Glutamine 167 serves as a coordination point for (2R)-2-phosphoglycerate. Glutamate 209 acts as the Proton donor in catalysis. Mg(2+)-binding residues include aspartate 246, glutamate 290, and aspartate 317. 4 residues coordinate (2R)-2-phosphoglycerate: lysine 342, arginine 371, serine 372, and lysine 393. The Proton acceptor role is filled by lysine 342.

Belongs to the enolase family. Component of the RNA degradosome, a multiprotein complex involved in RNA processing and mRNA degradation. Mg(2+) is required as a cofactor.

It localises to the cytoplasm. Its subcellular location is the secreted. The protein localises to the cell surface. The enzyme catalyses (2R)-2-phosphoglycerate = phosphoenolpyruvate + H2O. It participates in carbohydrate degradation; glycolysis; pyruvate from D-glyceraldehyde 3-phosphate: step 4/5. Catalyzes the reversible conversion of 2-phosphoglycerate (2-PG) into phosphoenolpyruvate (PEP). It is essential for the degradation of carbohydrates via glycolysis. The protein is Enolase of Escherichia coli O139:H28 (strain E24377A / ETEC).